Consider the following 101-residue polypeptide: Protein S100-A7-like 2 (101 aa).

2 consecutive EF-hand domains span residues 13–48 and 50–85; these read IVAMFRQYSGDDGRMDMPGLVNLMKENFPNFLSGCE and SDMDYLSNALEKKDDNKDKKVNYSEFLSLLGDITID. Ca(2+)-binding residues include Asp-63, Asn-65, Asp-67, Lys-69, and Glu-74. Residues His-87 and His-91 each coordinate Zn(2+).

Belongs to the S-100 family.

The polypeptide is Protein S100-A7-like 2 (S100A7L2) (Homo sapiens (Human)).